Consider the following 37-residue polypeptide: U1-ectatotoxin-Eb1a subunit B (37 aa).

It belongs to the ectatomin family. Ectatomin-Eq subfamily. As to quaternary structure, heterodimer of subunits A and B; disulfide-linked. As to expression, expressed by the venom gland.

It is found in the secreted. The protein resides in the target cell membrane. In Ectatomma brunneum (Ant), this protein is U1-ectatotoxin-Eb1a subunit B.